We begin with the raw amino-acid sequence, 138 residues long: Cysteine desulfuration protein SufE (138 aa).

Catalysis depends on C51, which acts as the Cysteine persulfide intermediate.

The protein belongs to the SufE family. In terms of assembly, homodimer. Interacts with SufS.

Its subcellular location is the cytoplasm. It functions in the pathway cofactor biosynthesis; iron-sulfur cluster biosynthesis. Its function is as follows. Participates in cysteine desulfuration mediated by SufS. Cysteine desulfuration mobilizes sulfur from L-cysteine to yield L-alanine and constitutes an essential step in sulfur metabolism for biosynthesis of a variety of sulfur-containing biomolecules. Functions as a sulfur acceptor for SufS, by mediating the direct transfer of the sulfur atom from the S-sulfanylcysteine of SufS, an intermediate product of cysteine desulfuration process. The sequence is that of Cysteine desulfuration protein SufE from Escherichia coli O157:H7.